The primary structure comprises 546 residues: FAD-dependent monooxygenase (546 aa).

Residues 1 to 17 (MYDVIVVGAGWCGLAAA) form the signal peptide. Position 106 (Ile-106) interacts with FAD. N-linked (GlcNAc...) asparagine glycosylation is found at Asn-239 and Asn-343.

Belongs to the FAD-binding monooxygenase family. FAD serves as cofactor.

The protein operates within antifungal biosynthesis. In terms of biological role, FAD-dependent monooxygenase; part of the gene cluster that mediates the biosynthesis of the tetrahydropyranyl antifungal agent lanomycin that acts as an inhibitor of CYP51 and blocks the ergosterol biosynthesis. The biosynthesis probably begins with the formation of an hexaketide, followed by methionine mediated alkylation of C-2 and C-6, and methylation of the reduced C-3 oxygen, pyran forming reductive ring closure, oxygenation of C-4, beta-keto reduction, enoyl reduction and dehydration of the remaining oxygens, and finally, acylation with glycine to complete the biosynthesis. The polypeptide is FAD-dependent monooxygenase (Pyrenophora dematioidea (Helminthosporium dematioideum)).